Consider the following 424-residue polypeptide: Arogenate dehydratase 4, chloroplastic (424 aa).

The transit peptide at 1–34 directs the protein to the chloroplast; sequence MQAATSCDLKFRSTDPTSRNKCFSHAIPKRVAVT. Positions 126 to 303 constitute a Prephenate dehydratase domain; sequence RVAYQGVPGA…NVTRFLMLAR (178 aa). An ACT domain is found at 319 to 410; the sequence is VFAAQEHKGT…SFLRVLGSYP (92 aa).

Expressed in roots, leaves, stems, flowers and siliques. More abundant in stems and roots.

It is found in the plastid. It localises to the chloroplast stroma. The enzyme catalyses L-arogenate + H(+) = L-phenylalanine + CO2 + H2O. It participates in amino-acid biosynthesis; L-phenylalanine biosynthesis; L-phenylalanine from L-arogenate: step 1/1. In terms of biological role, converts the prephenate produced from the shikimate-chorismate pathway into phenylalanine. This chain is Arogenate dehydratase 4, chloroplastic, found in Arabidopsis thaliana (Mouse-ear cress).